The primary structure comprises 458 residues: ATP synthase subunit beta (458 aa).

148–155 (GGAGVGKT) contributes to the ATP binding site.

The protein belongs to the ATPase alpha/beta chains family. F-type ATPases have 2 components, CF(1) - the catalytic core - and CF(0) - the membrane proton channel. CF(1) has five subunits: alpha(3), beta(3), gamma(1), delta(1), epsilon(1). CF(0) has three main subunits: a(1), b(2) and c(9-12). The alpha and beta chains form an alternating ring which encloses part of the gamma chain. CF(1) is attached to CF(0) by a central stalk formed by the gamma and epsilon chains, while a peripheral stalk is formed by the delta and b chains.

It localises to the cell inner membrane. It carries out the reaction ATP + H2O + 4 H(+)(in) = ADP + phosphate + 5 H(+)(out). Produces ATP from ADP in the presence of a proton gradient across the membrane. The catalytic sites are hosted primarily by the beta subunits. The protein is ATP synthase subunit beta of Pseudomonas fluorescens (strain ATCC BAA-477 / NRRL B-23932 / Pf-5).